Here is a 98-residue protein sequence, read N- to C-terminus: NADH-ubiquinone oxidoreductase chain 4L (98 aa).

Transmembrane regions (helical) follow at residues 2-22 (MMAV…TLMF), 26-46 (LMST…ITTI), and 59-79 (IPIV…ALLV).

This sequence belongs to the complex I subunit 4L family. As to quaternary structure, core subunit of respiratory chain NADH dehydrogenase (Complex I) which is composed of 45 different subunits.

It localises to the mitochondrion inner membrane. The enzyme catalyses a ubiquinone + NADH + 5 H(+)(in) = a ubiquinol + NAD(+) + 4 H(+)(out). Core subunit of the mitochondrial membrane respiratory chain NADH dehydrogenase (Complex I) which catalyzes electron transfer from NADH through the respiratory chain, using ubiquinone as an electron acceptor. Part of the enzyme membrane arm which is embedded in the lipid bilayer and involved in proton translocation. The protein is NADH-ubiquinone oxidoreductase chain 4L (MT-ND4L) of Phodopus sungorus (Striped hairy-footed hamster).